The following is a 325-amino-acid chain: ATP phosphoribosyltransferase (325 aa).

It belongs to the ATP phosphoribosyltransferase family. Long subfamily. Mg(2+) is required as a cofactor.

The protein localises to the cytoplasm. The enzyme catalyses 1-(5-phospho-beta-D-ribosyl)-ATP + diphosphate = 5-phospho-alpha-D-ribose 1-diphosphate + ATP. Its pathway is amino-acid biosynthesis; L-histidine biosynthesis; L-histidine from 5-phospho-alpha-D-ribose 1-diphosphate: step 1/9. Feedback inhibited by histidine. Catalyzes the condensation of ATP and 5-phosphoribose 1-diphosphate to form N'-(5'-phosphoribosyl)-ATP (PR-ATP). Has a crucial role in the pathway because the rate of histidine biosynthesis seems to be controlled primarily by regulation of HisG enzymatic activity. This chain is ATP phosphoribosyltransferase, found in Rhodopseudomonas palustris (strain BisB18).